Reading from the N-terminus, the 772-residue chain is MIRDLSKMYPQTRHPAPPHQPAQPFKFTISESCDRIKEEFQFLQAQYHSLKLECEKLASEKTEMQRHYVMYYEMSYGLNIEMHKQAEIVKRLNAICAQVIPFLSQEHQQQVVQAVERAKQVTMAELNAIIGQQLQAQHLSHAHGLPVPLTPHPSGLQPPAIPSIGSSAGLLALSSALGGQSHLPIKDEKKHHDSDHQRDRDSIKSSSVSPSASFRAAEKHRNSTDYSSESKKQKTEEKDIAARYDSDGEKSDDNLVVDVSNEDPSSPRGSPAHSPRENGLDKPRLLKKDAPISPASIASSSSTPSSKSKEHSHNEKSTTPVSKSNTPTPRTDAPTPGSNSSGLRPVPGKPPGVDPLTGLRTPMAVPCPYPTPFGIVPHAGMNGDLTSPGPAYASLHSISPQMSAAAAAAAAAAAYGRSPVVGFDPHHHMRVPGIPPNLTGIPGGKPAYSFHVSADGQMQPVPFPPDALIGPGIPRHARQINTLNHGEVVCAVTISNPTRHVYTGGKGCVKVWDISHPGNKSPVSQLDCLNRDNYIRSCRLLPDGRTLIVGGEASTLSIWDLAAPTPRIKAELTSSAPACYALAISPDSKVCFSCCSDGNIAVWDLHNQTLVRQFQGHTDGASCIDISNDGTKLWTGGLDNTVRSWDLREGRQLQQHDFTSQIFSLGYCPTGEWLAVGMENSNVEVLHVTKPDKYQLHLHESCVLSLKFAHCGKWFVSTGKDNLLNAWRTPYGASIFQSKESSSVLSCDISVDDKYIVTGSGDKKATVYEVIY.

Disordered regions lie at residues 1 to 24 and 183 to 359; these read MIRD…PAQP and LPIK…LTGL. The q domain stretch occupies residues 1-137; that stretch reads MIRDLSKMYP…AIIGQQLQAQ (137 aa). The interval 138 to 205 is GP domain; the sequence is HLSHAHGLPV…HQRDRDSIKS (68 aa). Residues 184-203 show a composition bias toward basic and acidic residues; that stretch reads PIKDEKKHHDSDHQRDRDSI. The span at 204-213 shows a compositional bias: low complexity; that stretch reads KSSSVSPSAS. Residues 206 to 275 form a ccN domain region; the sequence is SSVSPSASFR…SPRGSPAHSP (70 aa). 2 stretches are compositionally biased toward basic and acidic residues: residues 216 to 253 and 274 to 290; these read AAEK…KSDD and SPRE…KKDA. Residues 276–452 are SP domain; sequence RENGLDKPRL…GGKPAYSFHV (177 aa). The span at 291–306 shows a compositional bias: low complexity; that stretch reads PISPASIASSSSTPSS. A compositionally biased stretch (basic and acidic residues) spans 307–316; the sequence is KSKEHSHNEK. The span at 318–329 shows a compositional bias: polar residues; sequence TTPVSKSNTPTP. WD repeat units follow at residues 484-522, 530-569, 574-613, 616-655, 657-696, 698-737, and 739-772; these read NHGE…NKSP, NRDN…PRIK, SSAP…LVRQ, GHTD…QLQQ, DFTS…KYQL, LHES…SIFQ, and KESS…EVIY.

The protein belongs to the WD repeat Groucho/TLE family. As to quaternary structure, interacts with tcf7, tcf7l1, ripply2.2/bowline, dscr6/ripply3 and foxd3. Associates with tbx6 in the presence of ripply2.2/bowline. Interacts with EFNB1 through the SP domain. In terms of processing, ubiquitinated by XIAP/BIRC4. In terms of tissue distribution, expressed at high levels in the spleen and ovary.

It is found in the nucleus. Functionally, transcriptional corepressor. Functions with ripply2.2/bowline to down regulate transcription of tbx6-dependent gene expression. Represses transcription of siamois and nodal3. This is Transducin-like enhancer protein 4 (tle4) from Xenopus laevis (African clawed frog).